A 303-amino-acid polypeptide reads, in one-letter code: Inner kinetochore subunit mal2 (303 aa).

The protein belongs to the CENP-O/MCM21 family. In terms of assembly, component of the heterotetrameric kinetochore subcomplex COMA, which consists of fta2, fta7, mal2 and mis17. The COMA subcomplex is part of a larger constitutive centromere-associated network (CCAN) (also known as central kinetochore Sim4 complex in fission yeast), which is composed of at least cnl2, cnp3, cnp20, fta1, fta2, fta3, fta4, fta6, fta7, mal2, mhf1, mhf2, mis6, mis15, mis17, sim4 and wip1.

The protein localises to the nucleus. The protein resides in the chromosome. It localises to the centromere. Its subcellular location is the kinetochore. Its function is as follows. Component of the kinetochore, a multiprotein complex that assembles on centromeric DNA and attaches chromosomes to spindle microtubules, mediating chromosome segregation and sister chromatid segregation during meiosis and mitosis. Component of the inner kinetochore COMA complex, which connects centromere-associated proteins and the outer kinetochore. COMA interacts with other inner kinetochore proteins to form the inner kinetochore constitutive centromere-associated network (CCAN), which serves as a structural platform for outer kinetochore assembly. This chain is Inner kinetochore subunit mal2 (mal2), found in Schizosaccharomyces pombe (strain 972 / ATCC 24843) (Fission yeast).